We begin with the raw amino-acid sequence, 443 residues long: EGF-containing fibulin-like extracellular matrix protein 2 (443 aa).

A signal peptide spans 1-25 (MLPFASCLPGSLLLWALLLLLLGAA). The 46-residue stretch at 36–81 (YTECTDGYEWDADSQHCRDVNECLTIPEACKGEMKCINHYGGYLCL) folds into the EGF-like 1; atypical domain. Cystine bridges form between C58/C121, C65/C80, C71/C109, C127/C140, C134/C149, C151/C162, C168/C177, C173/C186, C188/C201, C207/C217, C213/C226, C228/C241, C247/C258, C254/C267, C269/C281, C287/C300, C294/C309, and C315/C327. An EGF-like 2; calcium-binding domain is found at 123-163 (DVDECAQALHDCRPSQDCHNLPGSYQCTCPDGYRKVGPECV). The 39-residue stretch at 164-202 (DIDECRYRYCQHRCVNLPGSFRCQCEPGFQLGPNNRSCV) folds into the EGF-like 3; calcium-binding domain. N198 carries an N-linked (GlcNAc...) asparagine glycan. The EGF-like 4; calcium-binding domain occupies 203–242 (DVNECDMGAPCEQRCFNSYGTFLCRCNQGYELHRDGFSCS). One can recognise an EGF-like 5; calcium-binding domain in the interval 243–282 (DIDECSYSSYLCQYRCVNEPGRFSCHCPQGYQLLATRLCQ). Positions 283 to 328 (DIDECETGAHQCSEAQTCVNFHGGYRCVDTNRCVEPYVQVSDNRCF) constitute an EGF-like 6; calcium-binding domain. N-linked (GlcNAc...) asparagine glycosylation is present at N394.

The protein belongs to the fibulin family. In terms of assembly, homodimer; disulfide-linked. Multimer; allows heparin binding. Monomer. Interacts with FBN1 (via N-terminal domain); this interaction inhibits EFEMP2 binding to LOX and ELN. Interacts with LOX (via propeptide); this interaction is strong and facilitates formation of ternary complexes with ELN during elastic fiber assembly; this interaction limits interaction of EFEMP2 with FBLN5. Interacts with PITX2. Interacts with ELN with moderate affinity; this interaction regulates ELN self-assembly maturation stage. Interacts with FBLN5 with moderate affinity. Interacts with LOXL1 (via propeptide), LTBP1 and TGFB1 stronger than with LOXL2 and LTBP3. Interacts with PCOLCE. Interacts with collagen type IV trimer (COL4A1-COL4A1-COL4A2), NID2 and moderately with COL15A1-derived endostatin. Interacts with EMILIN1; this interaction promotes the incorporation of EFEMP2 into the extracellular matrix. Interacts with LTBP4; the LTBP4 long form (LTBP4L) has a stronger binding affinity than the LTBP4 short form and the LTBP4 long form promotes fibrillar deposition of EFEMP2. N-glycosylated; contains mostly complex-type glycans. Not O-glycosylated. In terms of processing, cleaved by ELANE; produces a 50-55 kDa fragment. Cleaved by MMP2 and MMP9; produces several fragments.

Its subcellular location is the secreted. It localises to the extracellular space. The protein localises to the extracellular matrix. The protein resides in the basement membrane. Plays a crucial role in elastic fiber formation in tissue, and in the formation of ultrastructural connections between elastic laminae and smooth muscle cells in the aorta, therefore participates in terminal differentiation and maturation of smooth muscle cell (SMC) and in the mechanical properties and wall integrity maintenance of the aorta. In addition, is involved in the control of collagen fibril assembly in tissue throught proteolytic activation of LOX leading to cross- linking of collagen and elastin. Also promotes ELN coacervation and participates in the deposition of ELN coacervates on to microfibrils but also regulates ELN cross- linking through LOX interaction. Moreover adheres to the cells through heparin binding in a calcium-dependent manner and regulates vascularlar smooth muscle cells proliferation through angiotensin signaling. The protein is EGF-containing fibulin-like extracellular matrix protein 2 of Cricetulus griseus (Chinese hamster).